A 360-amino-acid chain; its full sequence is Ribosomal RNA large subunit methyltransferase M (360 aa).

Residues Ser-187, 220 to 223, Asp-239, Asp-259, and Asp-276 contribute to the S-adenosyl-L-methionine site; that span reads CPGG. The active-site Proton acceptor is Lys-305.

It belongs to the class I-like SAM-binding methyltransferase superfamily. RNA methyltransferase RlmE family. RlmM subfamily. Monomer.

The protein resides in the cytoplasm. It carries out the reaction cytidine(2498) in 23S rRNA + S-adenosyl-L-methionine = 2'-O-methylcytidine(2498) in 23S rRNA + S-adenosyl-L-homocysteine + H(+). Catalyzes the 2'-O-methylation at nucleotide C2498 in 23S rRNA. The protein is Ribosomal RNA large subunit methyltransferase M of Photobacterium profundum (strain SS9).